The following is a 129-amino-acid chain: Ig lambda-1 chain V region S43 (129 aa).

An N-terminal signal peptide occupies residues 1–19; that stretch reads MAWISLILSLLALSSGAIS. Gln-20 carries the post-translational modification Pyrrolidone carboxylic acid. The region spanning 20-125 is the Ig-like domain; the sequence is QAVVTQESAL…HWVFGGGTKL (106 aa).

The protein is Ig lambda-1 chain V region S43 of Mus musculus (Mouse).